A 281-amino-acid polypeptide reads, in one-letter code: 1-acyl-sn-glycerol-3-phosphate acyltransferase (281 aa).

3 helical membrane-spanning segments follow: residues 40 to 60, 71 to 91, and 110 to 130; these read IFVC…IMVL, LGNL…GIPI, and ASPI…VGVA. The HXXXXD motif motif lies at 109-114; that stretch reads HASPID.

The protein belongs to the 1-acyl-sn-glycerol-3-phosphate acyltransferase family.

It is found in the membrane. The enzyme catalyses a 1-acyl-sn-glycero-3-phosphate + an acyl-CoA = a 1,2-diacyl-sn-glycero-3-phosphate + CoA. The protein operates within phospholipid metabolism; CDP-diacylglycerol biosynthesis; CDP-diacylglycerol from sn-glycerol 3-phosphate: step 2/3. In terms of biological role, converts lysophosphatidic acid (LPA) into phosphatidic acid by incorporating acyl moiety at the 2 position. This enzyme uses erucoyl-CoA as an acyl donor. The protein is 1-acyl-sn-glycerol-3-phosphate acyltransferase (PLSC) of Limnanthes douglasii (Douglas' meadowfoam).